Consider the following 829-residue polypeptide: Spindle-defective protein 2 (829 aa).

Disordered stretches follow at residues 1–29 (MNEDAPMDLVDDRFADQSIQDEPVDDGES), 41–104 (EDED…SNDI), 183–294 (KKDV…TTSD), and 326–471 (RKKR…NGHM). The segment covering 54–82 (FRLENRYKPSLHTPRELPTIREENREDVR) has biased composition (basic and acidic residues). Residues 83-93 (SNTSSRVNTRP) show a composition bias toward polar residues. Residues 183–216 (KKDVTRKQENVRPGKMMPEKVNDENEPKSRRFSP) show a composition bias toward basic and acidic residues. Composition is skewed to polar residues over residues 217–230 (ERNTFTTSPMNSTK) and 266–294 (PQRTSGTPKTYESRHPTNAYTPNSATTSD). The stretch at 314-332 (VDINLLTALENARKKRDRP) forms a coiled coil. 2 stretches are compositionally biased toward low complexity: residues 361–370 (SMTSIVSSST) and 384–408 (NSATSTDLTNSNTSNFTNNTSRVST). 2 stretches are compositionally biased toward polar residues: residues 409 to 439 (AKNDFSRSSRQRNGFSDSSVSTIIPNMNSMT) and 448 to 463 (SVSSVRTISRASSTMT).

The protein localises to the cytoplasm. It is found in the cytoskeleton. It localises to the microtubule organizing center. The protein resides in the centrosome. Its subcellular location is the centriole. Functionally, required both for centrosome duplication and maturation. Required for pericentriolar material (PCM) recruitment. This chain is Spindle-defective protein 2, found in Caenorhabditis briggsae.